A 355-amino-acid chain; its full sequence is Putative beta-lactamase HcpE (355 aa).

The signal sequence occupies residues 1-22; the sequence is MNIKILKILVGGLFFLSLNAHL. TPR repeat units lie at residues 27-60, 63-96, 98-131, 132-166, 202-240, 245-275, 276-311, and 312-344; these read DNSFLGIGERAYKSGNYSKAASYFKKACNDGVSE, TQLGIIYENGQGTRIDYKKALEYYKTACQADDRE, CFGLGGLYDEGLGTAQNYQEAIDAYAKACVLKHP, ESCYNLGIIYDRKIKGNAAQAVTYYQKSCNFDMAK, GQACRALGSLFENGDAGLDEDFEVAFDYLQKACALNNSG, LGSMYMLGRYVKKDPQKAFNYFKQACDMGSA, VSCSRMGFMYSQGDTVSKDLRKALDNYERGCDMGDE, and VGCFALAGMYYNMKDKENAIMIYDKGCKLGMKQ. Disulfide bonds link cysteine 54–cysteine 62, cysteine 90–cysteine 98, cysteine 126–cysteine 134, cysteine 160–cysteine 168, cysteine 197–cysteine 205, cysteine 234–cysteine 242, cysteine 270–cysteine 278, cysteine 306–cysteine 314, and cysteine 338–cysteine 346.

It belongs to the hcp beta-lactamase family.

It localises to the secreted. It catalyses the reaction a beta-lactam + H2O = a substituted beta-amino acid. Its function is as follows. May hydrolyze 6-aminopenicillinic acid and 7-aminocephalosporanic acid (ACA) derivatives. This chain is Putative beta-lactamase HcpE (hcpE), found in Helicobacter pylori (strain J99 / ATCC 700824) (Campylobacter pylori J99).